The sequence spans 291 residues: 33 kDa chaperonin (291 aa).

2 cysteine pairs are disulfide-bonded: Cys-229/Cys-231 and Cys-262/Cys-265.

Belongs to the HSP33 family. Under oxidizing conditions two disulfide bonds are formed involving the reactive cysteines. Under reducing conditions zinc is bound to the reactive cysteines and the protein is inactive.

The protein localises to the cytoplasm. Redox regulated molecular chaperone. Protects both thermally unfolding and oxidatively damaged proteins from irreversible aggregation. Plays an important role in the bacterial defense system toward oxidative stress. In Vibrio cholerae serotype O1 (strain ATCC 39315 / El Tor Inaba N16961), this protein is 33 kDa chaperonin.